Reading from the N-terminus, the 338-residue chain is Large ribosomal subunit protein uL3 (338 aa).

A disordered region spans residues 1–37 (MPQPSRPRKGSMGFSPRKRAESEVPRIRSWASNDGAP).

This sequence belongs to the universal ribosomal protein uL3 family. Part of the 50S ribosomal subunit. Forms a cluster with proteins L14 and L24e.

One of the primary rRNA binding proteins, it binds directly near the 3'-end of the 23S rRNA, where it nucleates assembly of the 50S subunit. This chain is Large ribosomal subunit protein uL3, found in Haloquadratum walsbyi (strain DSM 16790 / HBSQ001).